The following is a 415-amino-acid chain: S-inosyl-L-homocysteine hydrolase (415 aa).

Residues Asp123 and Glu148 each coordinate substrate. 149 to 151 contacts NAD(+); sequence TTT. Substrate is bound by residues Lys178 and Asp182. Residues Asn183, 212–217, Glu235, 291–293, and Asn337 contribute to the NAD(+) site; these read GYGWCG and AGH.

This sequence belongs to the adenosylhomocysteinase family. It depends on NAD(+) as a cofactor.

The protein resides in the cytoplasm. It carries out the reaction S-inosyl-L-homocysteine + H2O = L-homocysteine + inosine. It participates in amino-acid biosynthesis; S-adenosyl-L-methionine biosynthesis. In terms of biological role, catalyzes the hydrolysis of S-inosyl-L-homocysteine (SIH) to L-homocysteine (Hcy) and inosine. Likely functions in a S-adenosyl-L-methionine (SAM) recycling pathway from S-adenosyl-L-homocysteine (SAH) produced from SAM-dependent methylation reactions. Can also catalyze the reverse reaction in vitro, i.e. the synthesis of SIH from Hcy and inosine. The chain is S-inosyl-L-homocysteine hydrolase from Methanococcus maripaludis (strain DSM 14266 / JCM 13030 / NBRC 101832 / S2 / LL).